Reading from the N-terminus, the 439-residue chain is Proline--tRNA ligase (439 aa).

It belongs to the class-II aminoacyl-tRNA synthetase family. ProS type 2 subfamily. As to quaternary structure, homodimer.

It localises to the cytoplasm. The catalysed reaction is tRNA(Pro) + L-proline + ATP = L-prolyl-tRNA(Pro) + AMP + diphosphate. Catalyzes the attachment of proline to tRNA(Pro) in a two-step reaction: proline is first activated by ATP to form Pro-AMP and then transferred to the acceptor end of tRNA(Pro). The polypeptide is Proline--tRNA ligase (Rhodopseudomonas palustris (strain BisA53)).